A 312-amino-acid chain; its full sequence is CD-NTase-associated protein 12 (312 aa).

One can recognise a TIR domain in the interval R5–D127.

In the C-terminal section; belongs to the bacterial STING family. Forms homodimers; in the presence of c-di-GMP forms filaments with an ordered array of parallel-stacked subunits.

The catalysed reaction is NAD(+) + H2O = ADP-D-ribose + nicotinamide + H(+). Its activity is regulated as follows. NAD(+) hydrolase activity is strongly stimulated by c-di-GMP, weakly by 3'3'-cGAMP, very weakly by c-di-AMP but not at all by 2'3'-cGAMP. Self-association of TIR domains is required for NADase activity. Effector protein of a CBASS antiviral system with NAD(+) hydrolase activity. CBASS (cyclic oligonucleotide-based antiphage signaling system) provides immunity against bacteriophage. The CD-NTase protein synthesizes cyclic nucleotides in response to infection; these serve as specific second messenger signals. The signals activate a diverse range of effectors, leading to bacterial cell death and thus abortive phage infection. A type I-D CBASS(GG) system. Its function is as follows. Binds c-di-GMP, does not bind cUMP-AMP. Upon activation by c-di-GMP forms filaments which hydrolyze NAD(+); filament formation is required for enzyme activation. The polypeptide is CD-NTase-associated protein 12 (Niabella drilacis (strain DSM 25811 / CCM 8410 / CCUG 62505 / LMG 26954 / E90)).